A 106-amino-acid polypeptide reads, in one-letter code: Pyrimidine/purine nucleoside phosphorylase (106 aa).

Belongs to the nucleoside phosphorylase PpnP family.

It catalyses the reaction a purine D-ribonucleoside + phosphate = a purine nucleobase + alpha-D-ribose 1-phosphate. The catalysed reaction is adenosine + phosphate = alpha-D-ribose 1-phosphate + adenine. The enzyme catalyses cytidine + phosphate = cytosine + alpha-D-ribose 1-phosphate. It carries out the reaction guanosine + phosphate = alpha-D-ribose 1-phosphate + guanine. It catalyses the reaction inosine + phosphate = alpha-D-ribose 1-phosphate + hypoxanthine. The catalysed reaction is thymidine + phosphate = 2-deoxy-alpha-D-ribose 1-phosphate + thymine. The enzyme catalyses uridine + phosphate = alpha-D-ribose 1-phosphate + uracil. It carries out the reaction xanthosine + phosphate = alpha-D-ribose 1-phosphate + xanthine. Its function is as follows. Catalyzes the phosphorolysis of diverse nucleosides, yielding D-ribose 1-phosphate and the respective free bases. Can use uridine, adenosine, guanosine, cytidine, thymidine, inosine and xanthosine as substrates. Also catalyzes the reverse reactions. This chain is Pyrimidine/purine nucleoside phosphorylase, found in Leptospira interrogans serogroup Icterohaemorrhagiae serovar copenhageni (strain Fiocruz L1-130).